A 276-amino-acid polypeptide reads, in one-letter code: MSLVIAVYGKGGIGKSTTSANISAALALKGAKVLQIGCDPKHDSTFPITGKLQKTVIEALEEVDFHHEELSPEDVIESGFAGIDGLEAGGPPAGSGCGGYVVGESVTLLQEMGLYDKYDVILFDVLGDVVCGGFSAPLNYADYAIIIATNDFDSIFAANRLCMAIQQKSVRYKVKLAGIVANRVDYTTGGGTNMLDQFAEKVGTRLLAKVPYHEMIRKSRFAGKTLFAMEEAQTEFPECLAPYNEIADALMQEHPIASVPVPIGDRELFKLVNGWQ.

ATP-binding positions include 12-17 (GIGKST) and K41. Residue S16 participates in Mg(2+) binding. C97 and C131 together coordinate [4Fe-4S] cluster. 182–183 (NR) lines the ATP pocket.

Belongs to the NifH/BchL/ChlL family. As to quaternary structure, homodimer. Protochlorophyllide reductase is composed of three subunits; BchL, BchN and BchB. [4Fe-4S] cluster is required as a cofactor.

The enzyme catalyses chlorophyllide a + oxidized 2[4Fe-4S]-[ferredoxin] + 2 ADP + 2 phosphate = protochlorophyllide a + reduced 2[4Fe-4S]-[ferredoxin] + 2 ATP + 2 H2O. Its pathway is porphyrin-containing compound metabolism; bacteriochlorophyll biosynthesis (light-independent). Functionally, component of the dark-operative protochlorophyllide reductase (DPOR) that uses Mg-ATP and reduced ferredoxin to reduce ring D of protochlorophyllide (Pchlide) to form chlorophyllide a (Chlide). This reaction is light-independent. The L component serves as a unique electron donor to the NB-component of the complex, and binds Mg-ATP. The polypeptide is Light-independent protochlorophyllide reductase iron-sulfur ATP-binding protein (Chlorobium chlorochromatii (strain CaD3)).